The primary structure comprises 267 residues: Tetrahydromethanopterin S-methyltransferase subunit C (267 aa).

8 helical membrane passes run leucine 18–valine 38, isoleucine 39–isoleucine 59, tyrosine 76–valine 96, isoleucine 99–leucine 119, isoleucine 138–threonine 158, leucine 163–isoleucine 183, phenylalanine 209–valine 229, and serine 230–glutamate 250.

The protein belongs to the MtrC family. As to quaternary structure, the complex is composed of 8 subunits; MtrA, MtrB, MtrC, MtrD, MtrE, MtrF, MtrG and MtrH.

The protein localises to the cell membrane. The enzyme catalyses 5-methyl-5,6,7,8-tetrahydromethanopterin + coenzyme M + 2 Na(+)(in) = 5,6,7,8-tetrahydromethanopterin + methyl-coenzyme M + 2 Na(+)(out). The protein operates within one-carbon metabolism; methanogenesis from CO(2); methyl-coenzyme M from 5,10-methylene-5,6,7,8-tetrahydromethanopterin: step 2/2. In terms of biological role, part of a complex that catalyzes the formation of methyl-coenzyme M and tetrahydromethanopterin from coenzyme M and methyl-tetrahydromethanopterin. This is an energy-conserving, sodium-ion translocating step. This Methanothermobacter marburgensis (strain ATCC BAA-927 / DSM 2133 / JCM 14651 / NBRC 100331 / OCM 82 / Marburg) (Methanobacterium thermoautotrophicum) protein is Tetrahydromethanopterin S-methyltransferase subunit C.